The chain runs to 82 residues: Small ribosomal subunit protein uS17 (82 aa).

Belongs to the universal ribosomal protein uS17 family. In terms of assembly, part of the 30S ribosomal subunit.

In terms of biological role, one of the primary rRNA binding proteins, it binds specifically to the 5'-end of 16S ribosomal RNA. The protein is Small ribosomal subunit protein uS17 of Shewanella sp. (strain W3-18-1).